The chain runs to 330 residues: Laforin (330 aa).

A CBM20 domain is found at 1-123 (MLFRFGVVVP…DNLVDGVYCL (123 aa)). Ser-25 is modified (phosphoserine; by AMPK). Substrate contacts are provided by residues Trp-32, Lys-86, 102–106 (GPHHD), Asp-196, Asp-234, and Arg-240. A Tyrosine-protein phosphatase domain is found at 155–322 (HYSRILPNIW…QQDFSQKFGK (168 aa)). Cys-265 serves as the catalytic Phosphocysteine intermediate. Residues 265–271 (CNAGVGR) carry the Glucan phosphatase signature motif CXAGXGR motif. Residues 266-271 (NAGVGR) and Tyr-303 contribute to the substrate site.

This sequence belongs to the protein-tyrosine phosphatase family. As to quaternary structure, homodimer. Interacts with PPP1R3B, PPP1R3C, HIRIP5, and EPM2AIP1. Binds glycogen and Lafora bodies. Interacts with NHLRC1/malin (via the NHL repeats). Forms a complex with NHLRC1/malin and HSP70. Interacts with PPP1R3D; in the presence of NHLC1/malin the interaction leads to ubiquitination and autophagic degradation of PPP1R3D. Interacts (via the phosphatase domain) with MAPT/Tau; the interaction dephosphorylates MAPT. Interacts with PRDM8. Polyubiquitinated by NHLRC1/malin. Post-translationally, phosphorylation on Ser-25 by AMPK affects the phosphatase activity of the enzyme and its ability to homodimerize and interact with NHLRC1, PPP1R3C or PRKAA2. As to expression, detected in skeletal muscle and in brain (at protein level). Widely expressed. Higher levels of expression are found in heart, brain, liver, skeletal muscle and kidney.

It is found in the cytoplasm. It localises to the endoplasmic reticulum membrane. The protein resides in the cell membrane. The catalysed reaction is O-phospho-L-tyrosyl-[protein] + H2O = L-tyrosyl-[protein] + phosphate. The enzyme catalyses O-phospho-L-seryl-[protein] + H2O = L-seryl-[protein] + phosphate. It carries out the reaction O-phospho-L-threonyl-[protein] + H2O = L-threonyl-[protein] + phosphate. Plays an important role in preventing glycogen hyperphosphorylation and the formation of insoluble aggregates, via its activity as glycogen phosphatase, and by promoting the ubiquitination of proteins involved in glycogen metabolism via its interaction with the E3 ubiquitin ligase NHLRC1/malin. Dephosphorylates phosphotyrosine and synthetic substrates, such as para-nitrophenylphosphate (pNPP), and has low activity with phosphoserine and phosphothreonine substrates (in vitro). Has also been shown to dephosphorylate MAPT. Shows strong phosphatase activity towards complex carbohydrates in vitro, avoiding glycogen hyperphosphorylation which is associated with reduced branching and formation of insoluble aggregates. Forms a complex with NHLRC1/malin and HSP70, which suppresses the cellular toxicity of misfolded proteins by promoting their degradation through the ubiquitin-proteasome system (UPS). Acts as a scaffold protein to facilitate PPP1R3C/PTG ubiquitination by NHLRC1/malin. Also promotes proteasome-independent protein degradation through the macroautophagy pathway. The sequence is that of Laforin (Epm2a) from Mus musculus (Mouse).